A 72-amino-acid chain; its full sequence is Translation initiation factor IF-1 (72 aa).

Residues 1-72 (MSKEENIEMQ…TKGRIIFRSR (72 aa)) enclose the S1-like domain.

The protein belongs to the IF-1 family. In terms of assembly, component of the 30S ribosomal translation pre-initiation complex which assembles on the 30S ribosome in the order IF-2 and IF-3, IF-1 and N-formylmethionyl-tRNA(fMet); mRNA recruitment can occur at any time during PIC assembly.

It localises to the cytoplasm. One of the essential components for the initiation of protein synthesis. Stabilizes the binding of IF-2 and IF-3 on the 30S subunit to which N-formylmethionyl-tRNA(fMet) subsequently binds. Helps modulate mRNA selection, yielding the 30S pre-initiation complex (PIC). Upon addition of the 50S ribosomal subunit IF-1, IF-2 and IF-3 are released leaving the mature 70S translation initiation complex. This chain is Translation initiation factor IF-1, found in Buchnera aphidicola subsp. Acyrthosiphon pisum (strain APS) (Acyrthosiphon pisum symbiotic bacterium).